The following is a 192-amino-acid chain: Ion-translocating oxidoreductase complex subunit A (192 aa).

6 consecutive transmembrane segments (helical) span residues 5 to 25, 39 to 59, 65 to 85, 102 to 122, 134 to 154, and 171 to 191; these read LLLL…FLGL, IGMS…SYLV, LPFE…AVVV, ALGI…VALL, AIYG…FSAM, and AIAM…TGLV.

It belongs to the NqrDE/RnfAE family. The complex is composed of six subunits: RnfA, RnfB, RnfC, RnfD, RnfE and RnfG.

It is found in the cell inner membrane. Its function is as follows. Part of a membrane-bound complex that couples electron transfer with translocation of ions across the membrane. This chain is Ion-translocating oxidoreductase complex subunit A, found in Shewanella sediminis (strain HAW-EB3).